The primary structure comprises 687 residues: Chloride channel protein ClC-Kb (687 aa).

The Cytoplasmic portion of the chain corresponds to 1–50; it reads MEEIVGLREGSPRKPVPLQELWRPCPRIRRNIQGSLEWLKERLFRVGEDW. Helical transmembrane passes span 51–82 and 91–111; these read YFLVALGVLMALISYAMNFAIGRVVRAHKWLY and LRYLSWTVYPVALLSFSSGFS. An intramembrane region (helical) is located at residues 116–127; the sequence is PSSGGSGIPEVK. S121 serves as a coordination point for chloride. The next 2 membrane-spanning stretches (helical) occupy residues 141–160 and 161–180; these read IKNFGAKVVGLSCTLATGST and IFLGKLGPFVHLSVMIAAYL. N-linked (GlcNAc...) asparagine glycosylation is present at N193. Positions 203–224 form an intramembrane region, helical; that stretch reads AGAAVGVATVFAAPISGVLFSI. Residues 236 to 255 traverse the membrane as a helical segment; that stretch reads YWRGFFAATCGAFMFHLLAV. Ca(2+)-binding residues include E259, E261, D278, and E281. A run of 2 helical transmembrane segments spans residues 282–310 and 325–342; these read IFFFVALGAICGILSCGYNYCQRTSLFFL and PLYSALAAVVLASITYPP. An intramembrane region (helical) is located at residues 349 to 360; sequence ASRLSMSEYLET. 2 helical membrane-spanning segments follow: residues 400-420 and 421-440; these read GTLVFFLVMKFWMLILATTIP and IPAGYFLPIFVYGAAIGRLF. Position 426 (F426) interacts with chloride. Positions 464-496 form an intramembrane region, helical; it reads GAYALAGAAAFSGAVTHTLSTALLAFEVSGQIV. A helical transmembrane segment spans residues 500-520; sequence PVLMAVLAANAICQSYQPSFY. Over 521 to 687 the chain is Cytoplasmic; the sequence is DGTIIVKKLP…STLTNPPAPK (167 aa). CBS domains are found at residues 551-609 and 626-687; these read MNCT…DSAS and CPTQ…PAPK.

It belongs to the chloride channel (TC 2.A.49) family. CLCNKB subfamily. Homodimer. Interacts with BSND. Post-translationally, N-glycosylated. Expressed predominantly in the kidney. Expressed in all segments of the nephron examined, including the S2 segment and the glomerulus.

The protein resides in the basolateral cell membrane. The catalysed reaction is chloride(in) = chloride(out). It catalyses the reaction iodide(out) = iodide(in). The enzyme catalyses nitrate(in) = nitrate(out). It carries out the reaction bromide(in) = bromide(out). Functionally, anion-selective channel permeable to small monovalent anions with ion selectivity for chloride &gt; bromide &gt; nitrate &gt; iodide. Forms a homodimeric channel where each subunit has its own ion conduction pathway. May conduct double-barreled currents controlled by two types of gates, two fast gates that control each subunit independently and a slow common gate that opens and shuts off both subunits simultaneously. Assembles with the regulatory subunit BSND/Barttin for sorting at the basolateral plasma membrane domain and functional switch to the ion conducting state. CLCNKB:BSND channels display mostly a linear current-voltage relationship controlled by common gate. Mediates chloride conductance along nephron segments, namely the thick ascending limb of Henle's loop, convoluted tubule and the collecting duct, contributing to the maintenance of systemic acid-base and electrolyte homeostasis. Conducts chloride currents in the stria vascularis of the inner ear to establish the endocochlear potential necessary for normal hearing. The protein is Chloride channel protein ClC-Kb of Rattus norvegicus (Rat).